A 110-amino-acid polypeptide reads, in one-letter code: Protein RnfH (110 aa).

Positions 86-110 (RKRAAQQAKDQEEKKKAEKSANKEN) are disordered. A compositionally biased stretch (basic and acidic residues) spans 94–110 (KDQEEKKKAEKSANKEN).

Belongs to the UPF0125 (RnfH) family.

The protein is Protein RnfH of Mannheimia succiniciproducens (strain KCTC 0769BP / MBEL55E).